We begin with the raw amino-acid sequence, 466 residues long: UDP-N-acetylmuramoylalanine--D-glutamate ligase (466 aa).

117 to 123 (GTKGKTT) contacts ATP.

It belongs to the MurCDEF family.

It is found in the cytoplasm. It catalyses the reaction UDP-N-acetyl-alpha-D-muramoyl-L-alanine + D-glutamate + ATP = UDP-N-acetyl-alpha-D-muramoyl-L-alanyl-D-glutamate + ADP + phosphate + H(+). It functions in the pathway cell wall biogenesis; peptidoglycan biosynthesis. Functionally, cell wall formation. Catalyzes the addition of glutamate to the nucleotide precursor UDP-N-acetylmuramoyl-L-alanine (UMA). This chain is UDP-N-acetylmuramoylalanine--D-glutamate ligase, found in Roseiflexus sp. (strain RS-1).